We begin with the raw amino-acid sequence, 131 residues long: Type 3 secretion system pilotin (131 aa).

Residues 1–15 (MSRIIALIISFLLVG) form the signal peptide. C16 is lipidated: N-palmitoyl cysteine. C16 is lipidated: S-diacylglycerol cysteine.

The protein belongs to the ExsB/YscW family. In terms of assembly, interacts with YscC/SctC.

The protein localises to the cell outer membrane. In terms of biological role, involved in the synthesis of the type III secretion system (T3SS), also called injectisome, which is used to inject bacterial effector proteins into eukaryotic host cells. Pilot protein that is required for the proper localization of the secretin YscC/SctC in the outer membrane. Also required for efficient oligomerization of YscC/SctC and stabilization of the oligomers. This Yersinia enterocolitica protein is Type 3 secretion system pilotin.